Consider the following 338-residue polypeptide: Malate dehydrogenase, mitochondrial (338 aa).

Residues 1–24 (MLSALARPAGAALRRSFSTSAQNN) constitute a mitochondrion transit peptide. NAD(+) contacts are provided by residues 31–37 (GASGGIG) and D57. The O-linked (GalNAc...) serine glycan is linked to S33. K78 and K91 each carry N6-acetyllysine; alternate. N6-succinyllysine; alternate occurs at positions 78 and 91. Substrate contacts are provided by R104 and R110. Residues N117 and 140-142 (ISN) contribute to the NAD(+) site. A substrate-binding site is contributed by N142. K165 carries the post-translational modification N6-acetyllysine. D173 acts as the Proton relay in catalysis. Substrate is bound at residue R176. K185 carries the post-translational modification N6-acetyllysine; alternate. Residue K185 is modified to N6-succinyllysine; alternate. Catalysis depends on H200, which acts as the Proton acceptor. Residue K203 is modified to N6-succinyllysine. N6-acetyllysine; alternate is present on residues K215 and K239. K215 and K239 each carry N6-succinyllysine; alternate. Position 239 is an N6-malonyllysine; alternate (K239). S246 carries the phosphoserine modification. NAD(+) is bound at residue M251. The residue at position 269 (K269) is an N6-succinyllysine. N6-acetyllysine; alternate is present on residues K296, K301, K307, K314, and K324. N6-succinyllysine; alternate is present on residues K296, K301, K307, K314, and K324. At K307 the chain carries N6-malonyllysine; alternate. The residue at position 326 (S326) is a Phosphoserine. An N6-acetyllysine; alternate mark is found at K328, K329, and K335. An N6-succinyllysine; alternate modification is found at K328. N6-malonyllysine; alternate is present on K329. Residue K335 is modified to N6-succinyllysine; alternate.

Belongs to the LDH/MDH superfamily. MDH type 1 family. Homodimer. Acetylation is enhanced after treatment either with trichostin A (TSA) or with nicotinamide (NAM) with the appearance of tri- and tetraacetylations. Glucose also increases acetylation. Ubiquitously expressed. Highly expressed in skeletal muscle and heart. Also expressed in liver, ileum, colon, kidney and adipose tissue, and at very low levels in lung, pancreas, stomach and spleen.

Its subcellular location is the mitochondrion matrix. The enzyme catalyses (S)-malate + NAD(+) = oxaloacetate + NADH + H(+). Its activity is regulated as follows. Enzyme activity is enhanced by acetylation. This chain is Malate dehydrogenase, mitochondrial, found in Felis catus (Cat).